Here is a 1111-residue protein sequence, read N- to C-terminus: RecBCD enzyme subunit RecC (1111 aa).

Belongs to the RecC family. As to quaternary structure, heterotrimer of RecB, RecC and RecD. All subunits contribute to DNA-binding.

In terms of biological role, a helicase/nuclease that prepares dsDNA breaks (DSB) for recombinational DNA repair. Binds to DSBs and unwinds DNA via a highly rapid and processive ATP-dependent bidirectional helicase activity. Unwinds dsDNA until it encounters a Chi (crossover hotspot instigator) sequence from the 3' direction. Cuts ssDNA a few nucleotides 3' to the Chi site. The properties and activities of the enzyme are changed at Chi. The Chi-altered holoenzyme produces a long 3'-ssDNA overhang and facilitates RecA-binding to the ssDNA for homologous DNA recombination and repair. Holoenzyme degrades any linearized DNA that is unable to undergo homologous recombination. In the holoenzyme this subunit recognizes the wild-type Chi sequence, and when added to isolated RecB increases its ATP-dependent helicase processivity. This is RecBCD enzyme subunit RecC from Buchnera aphidicola subsp. Baizongia pistaciae (strain Bp).